The chain runs to 371 residues: Alanine dehydrogenase (371 aa).

2 residues coordinate substrate: Arg-15 and Lys-75. His-96 (proton donor/acceptor) is an active-site residue. NAD(+)-binding positions include Ser-134, Thr-178–Ala-179, Asp-198, Lys-203, Ser-220, Val-239–Leu-240, Ile-267–Asp-270, Arg-279, and Val-298–Met-301. Asp-270 functions as the Proton donor/acceptor in the catalytic mechanism. Mg(2+) is bound by residues Glu-323 and His-327.

It belongs to the AlaDH/PNT family. In terms of assembly, homohexamer. Trimer of dimers. Mg(2+) serves as cofactor.

The protein resides in the secreted. It carries out the reaction L-alanine + NAD(+) + H2O = pyruvate + NH4(+) + NADH + H(+). It functions in the pathway amino-acid degradation; L-alanine degradation via dehydrogenase pathway; NH(3) and pyruvate from L-alanine: step 1/1. Its function is as follows. Catalyzes the reversible reductive amination of pyruvate to L-alanine. However, since the physiological environment of M.tuberculosis has a neutral pH, it can be assumed that the enzyme catalyzes exclusively the formation of L-alanine. May play a role in cell wall synthesis as L-alanine is an important constituent of the peptidoglycan layer. The chain is Alanine dehydrogenase (ald) from Mycobacterium tuberculosis (strain CDC 1551 / Oshkosh).